The primary structure comprises 375 residues: Succinyl-diaminopimelate desuccinylase (375 aa).

A Zn(2+)-binding site is contributed by H66. Residue D68 is part of the active site. Position 99 (D99) interacts with Zn(2+). E133 serves as the catalytic Proton acceptor. Zn(2+)-binding residues include E134, E162, and H348.

The protein belongs to the peptidase M20A family. DapE subfamily. As to quaternary structure, homodimer. Requires Zn(2+) as cofactor. Co(2+) serves as cofactor.

The catalysed reaction is N-succinyl-(2S,6S)-2,6-diaminopimelate + H2O = (2S,6S)-2,6-diaminopimelate + succinate. The protein operates within amino-acid biosynthesis; L-lysine biosynthesis via DAP pathway; LL-2,6-diaminopimelate from (S)-tetrahydrodipicolinate (succinylase route): step 3/3. Functionally, catalyzes the hydrolysis of N-succinyl-L,L-diaminopimelic acid (SDAP), forming succinate and LL-2,6-diaminopimelate (DAP), an intermediate involved in the bacterial biosynthesis of lysine and meso-diaminopimelic acid, an essential component of bacterial cell walls. In Escherichia coli O7:K1 (strain IAI39 / ExPEC), this protein is Succinyl-diaminopimelate desuccinylase.